Reading from the N-terminus, the 66-residue chain is Large ribosomal subunit protein bL35 (66 aa).

2 stretches are compositionally biased toward basic residues: residues 1–16 (MPKQ…RVKR) and 23–45 (KRGR…RQLR). The tract at residues 1–53 (MPKQKTHRGLAKRVKRTGGGGLKRGRAFTSHRFHGKTKKQRRQLRKASMVAKG) is disordered.

Belongs to the bacterial ribosomal protein bL35 family.

This is Large ribosomal subunit protein bL35 from Enterococcus faecalis (strain ATCC 700802 / V583).